Here is a 127-residue protein sequence, read N- to C-terminus: Copper resistance protein C (127 aa).

A signal peptide spans 1-25 (MFAFRSIATTVVMVAASLASASAFA). Positions 26, 65, 68, 71, 76, and 116 each coordinate Cu cation.

This sequence belongs to the CopC family.

It is found in the periplasm. In terms of biological role, copper-binding protein involved in copper resistance. The sequence is that of Copper resistance protein C from Xanthomonas campestris pv. juglandis (Xanthomonas arboricola pv. juglandis).